Consider the following 490-residue polypeptide: Probable glycine dehydrogenase (decarboxylating) subunit 2 (490 aa).

Lys273 bears the N6-(pyridoxal phosphate)lysine mark.

This sequence belongs to the GcvP family. C-terminal subunit subfamily. As to quaternary structure, the glycine cleavage system is composed of four proteins: P, T, L and H. In this organism, the P 'protein' is a heterodimer of two subunits. The cofactor is pyridoxal 5'-phosphate.

It carries out the reaction N(6)-[(R)-lipoyl]-L-lysyl-[glycine-cleavage complex H protein] + glycine + H(+) = N(6)-[(R)-S(8)-aminomethyldihydrolipoyl]-L-lysyl-[glycine-cleavage complex H protein] + CO2. Its function is as follows. The glycine cleavage system catalyzes the degradation of glycine. The P protein binds the alpha-amino group of glycine through its pyridoxal phosphate cofactor; CO(2) is released and the remaining methylamine moiety is then transferred to the lipoamide cofactor of the H protein. This is Probable glycine dehydrogenase (decarboxylating) subunit 2 from Staphylococcus aureus (strain MRSA252).